Here is a 227-residue protein sequence, read N- to C-terminus: Ribose-5-phosphate isomerase A (227 aa).

Substrate-binding positions include threonine 30–threonine 33, aspartate 86–aspartate 89, and lysine 99–glycine 102. The active-site Proton acceptor is the glutamate 108. Lysine 126 is a binding site for substrate.

It belongs to the ribose 5-phosphate isomerase family. Homodimer.

It catalyses the reaction aldehydo-D-ribose 5-phosphate = D-ribulose 5-phosphate. The protein operates within carbohydrate degradation; pentose phosphate pathway; D-ribose 5-phosphate from D-ribulose 5-phosphate (non-oxidative stage): step 1/1. Its function is as follows. Catalyzes the reversible conversion of ribose-5-phosphate to ribulose 5-phosphate. The chain is Ribose-5-phosphate isomerase A from Thermus thermophilus (strain ATCC 27634 / DSM 579 / HB8).